Consider the following 401-residue polypeptide: Multidrug resistance protein MdtH (401 aa).

Transmembrane regions (helical) follow at residues 13 to 33 (YFLLFDNLLVVLGFFVVFPLI), 34 to 54 (SIHFVEQLGWAALVVGFALGL), 78 to 95 (MIVTGMLLRALGFAFIAL), 99 to 116 (PWILWLACILSALGGTLF), 139 to 159 (LLLMQDSAGAVIGALIGSWLL), 165 to 185 (FVCWTGAGVFVLAAIWNALFL), 214 to 234 (VLTLTGYFMLSVQVMLMFPII), 243 to 263 (AAVKWMYAIEATLSLTLLYPI), 289 to 309 (FPVGLIGEINTLFGLICLFYL), 340 to 360 (LGLALGGALGYTGGGWLYDTG), and 365 to 385 (IPQLPWFLLGIIGLITLYALH).

It belongs to the major facilitator superfamily. DHA1 family. MdtH (TC 2.A.1.2.21) subfamily.

It localises to the cell inner membrane. The protein is Multidrug resistance protein MdtH of Photorhabdus laumondii subsp. laumondii (strain DSM 15139 / CIP 105565 / TT01) (Photorhabdus luminescens subsp. laumondii).